The following is a 95-amino-acid chain: Immunogenic miracidial antigen 8C (95 aa).

A compositionally biased stretch (polar residues) spans 1-15; it reads EFTISFSSPVISTGQ. The tract at residues 1 to 95 is disordered; sequence EFTISFSSPV…PKKYGSGHKY (95 aa). Acidic residues predominate over residues 20–41; that stretch reads GDEDYHDGDDDVDYTDDVDDVD. The segment covering 45-59 has biased composition (polar residues); the sequence is GSPSQLLQGGYQRNQ.

It belongs to the immunogenic miracidial antigen family.

The sequence is that of Immunogenic miracidial antigen 8C (8C) from Schistosoma japonicum (Blood fluke).